Here is a 2412-residue protein sequence, read N- to C-terminus: Genome polyprotein 1 (2412 aa).

The interval 1–23 is disordered; sequence MEQTLAQAVSRRGKTNTPMAEER. In terms of domain architecture, Helicase ATP-binding spans 474–632; that stretch reads AMADANNCWS…AARKYPLHVE (159 aa). 487 to 494 serves as a coordination point for ATP; that stretch reads GHTGSGKS. One can recognise a Helicase C-terminal domain in the interval 647-813; the sequence is GGGDLLDISK…NVPFYMNETF (167 aa). The residue at position 1234 (tyrosine 1234) is an O-(5'-phospho-RNA)-tyrosine. A Peptidase C4 domain is found at 1359–1574; the sequence is ISFGASTGIL…CGYSSHNALF (216 aa). Catalysis depends on for nuclear inclusion protein A activity residues histidine 1404, aspartate 1440, and cysteine 1507. In terms of domain architecture, RdRp catalytic spans 1858 to 1982; that stretch reads WLHGSGDGSR…AISPQFDEEF (125 aa). The tract at residues 2178–2202 is disordered; that stretch reads PTEDDGKLKTPSGARIPSSAADGNW.

The protein belongs to the bymoviruses polyprotein 1 family. Post-translationally, VPg is uridylylated by the polymerase and is covalently attached to the 5'-end of the genomic RNA. This uridylylated form acts as a nucleotide-peptide primer for the polymerase. The viral RNA1 of bymoviruses is expressed as a single polyprotein which undergoes post-translational proteolytic processing by the main proteinase NIa-pro resulting in the production of at least eight individual proteins.

The protein localises to the host cytoplasmic vesicle. Its subcellular location is the virion. The enzyme catalyses RNA(n) + a ribonucleoside 5'-triphosphate = RNA(n+1) + diphosphate. It carries out the reaction Hydrolyzes glutaminyl bonds, and activity is further restricted by preferences for the amino acids in P6 - P1' that vary with the species of potyvirus, e.g. Glu-Xaa-Xaa-Tyr-Xaa-Gln-|-(Ser or Gly) for the enzyme from tobacco etch virus. The natural substrate is the viral polyprotein, but other proteins and oligopeptides containing the appropriate consensus sequence are also cleaved.. Indispensable for virus replication. Its function is as follows. Mediates the cap-independent, EIF4E-dependent translation of viral genomic RNAs. Binds to the cap-binding site of host EIF4E and thus interferes with the host EIF4E-dependent mRNA export and translation. VPg-RNA directly binds EIF4E and is a template for transcription. Also forms trimeric complexes with EIF4E-EIF4G, which are templates for translation. In terms of biological role, has RNA-binding and proteolytic activities. Functionally, an RNA-dependent RNA polymerase that plays an essential role in the virus replication. This Hordeum vulgare (Barley) protein is Genome polyprotein 1.